We begin with the raw amino-acid sequence, 174 residues long: MDSKSGRSESAINIPESNSTKHKSTAVHTATKVAAVAPRGGGWRRGVSIFDFILRICALAAALAATATMGTTDQTLPFFTQIIQFQASYDDLPVFTFFVVANGIASGYLVLSLPFSIATIVRPHAAAIKLLLIIFDTQFNDFCQRVSGAVVASFVAAVILIFLVVLSAVAIRKH.

The interval 1–25 is disordered; the sequence is MDSKSGRSESAINIPESNSTKHKST. The Cytoplasmic segment spans residues 1-46; sequence MDSKSGRSESAINIPESNSTKHKSTAVHTATKVAAVAPRGGGWRRG. Over residues 8–18 the composition is skewed to polar residues; the sequence is SESAINIPESN. The chain crosses the membrane as a helical span at residues 47–67; sequence VSIFDFILRICALAAALAATA. The Extracellular segment spans residues 68-96; the sequence is TMGTTDQTLPFFTQIIQFQASYDDLPVFT. A helical transmembrane segment spans residues 97–117; it reads FFVVANGIASGYLVLSLPFSI. Over 118–119 the chain is Cytoplasmic; it reads AT. The helical transmembrane segment at 120–139 threads the bilayer; that stretch reads IVRPHAAAIKLLLIIFDTQF. At 140 to 150 the chain is on the extracellular side; it reads NDFCQRVSGAV. The chain crosses the membrane as a helical span at residues 151–171; that stretch reads VASFVAAVILIFLVVLSAVAI. Topologically, residues 172 to 174 are cytoplasmic; that stretch reads RKH.

This sequence belongs to the Casparian strip membrane proteins (CASP) family. As to quaternary structure, homodimer and heterodimers.

The protein resides in the cell membrane. This is CASP-like protein 1 from Triphysaria pusilla (Dwarf owl's-clover).